The primary structure comprises 259 residues: 1-(5-phosphoribosyl)-5-[(5-phosphoribosylamino)methylideneamino] imidazole-4-carboxamide isomerase (259 aa).

Residue Asp8 is the Proton acceptor of the active site. Asp129 functions as the Proton donor in the catalytic mechanism.

Belongs to the HisA/HisF family.

Its subcellular location is the cytoplasm. The enzyme catalyses 1-(5-phospho-beta-D-ribosyl)-5-[(5-phospho-beta-D-ribosylamino)methylideneamino]imidazole-4-carboxamide = 5-[(5-phospho-1-deoxy-D-ribulos-1-ylimino)methylamino]-1-(5-phospho-beta-D-ribosyl)imidazole-4-carboxamide. The protein operates within amino-acid biosynthesis; L-histidine biosynthesis; L-histidine from 5-phospho-alpha-D-ribose 1-diphosphate: step 4/9. In Pelotomaculum thermopropionicum (strain DSM 13744 / JCM 10971 / SI), this protein is 1-(5-phosphoribosyl)-5-[(5-phosphoribosylamino)methylideneamino] imidazole-4-carboxamide isomerase.